Consider the following 151-residue polypeptide: Acidic phospholipase A2 1 (151 aa).

The N-terminal stretch at 1 to 21 (MNPAHLLVLSAVCVSLLGASS) is a signal peptide. Positions 22–27 (IPPQPL) are excised as a propeptide. Intrachain disulfides connect cysteine 38/cysteine 104, cysteine 54/cysteine 151, cysteine 56/cysteine 72, cysteine 71/cysteine 132, cysteine 78/cysteine 125, cysteine 88/cysteine 118, and cysteine 111/cysteine 123. Ca(2+) is bound by residues tyrosine 55, glycine 57, and glycine 59. Residue histidine 75 is part of the active site. Residue aspartate 76 coordinates Ca(2+). Residue aspartate 126 is part of the active site.

Ca(2+) serves as cofactor. Expressed by the venom gland.

The protein localises to the secreted. It catalyses the reaction a 1,2-diacyl-sn-glycero-3-phosphocholine + H2O = a 1-acyl-sn-glycero-3-phosphocholine + a fatty acid + H(+). Functionally, snake venom phospholipase A2 (PLA2) that may exhibit cardiotoxicity, myotoxicity, antiplatelet activity, and edema-inducing activity. PLA2 catalyzes the calcium-dependent hydrolysis of the 2-acyl groups in 3-sn-phosphoglycerides. This is Acidic phospholipase A2 1 from Ophiophagus hannah (King cobra).